We begin with the raw amino-acid sequence, 419 residues long: MRFVDYVSIEVVAGKGGDGIISFRREAHVDKGGPDGGDGGWGGSIYFVGDSGMNTLLPFYQTKKIFGYNGENGRPKRQTGANGKDIFIKVPLGTQVFLKKSLICDIILEKKYLIAKGGRGGLGNFHFRNSKNKAPRISENGELGQNFYLDLQLKVMADIGLVGKPNAGKSTLLSLISNSKPKIANYEFTTLVPQLGVVKIYENSFVTADLPGLIQGASSGKGMGIIFLKHIERCRAIVHVIDFGSDNKNPIKDFIEIKSELEKFNKKLLDLNQIVIANKCDLPNFQFNLANFKRKFPKIKIIKSSLISAKQNEINIIKEKMFGLLEEKQKKLEIQEINTSKIEFNLKAPFLIKSRNNGFFEITGELIQKIIQKIPLNSQENILRFNAKVKKIGLWDELIKKGIKPGDLVRIYEFEFHWN.

The region spanning M1 to M156 is the Obg domain. Residues A157–I334 form the OBG-type G domain. GTP is bound by residues G163–S170, F188–V192, D209–G212, N278–D281, and N315–I317. Residues S170 and T190 each coordinate Mg(2+). The region spanning I342–N419 is the OCT domain.

Belongs to the TRAFAC class OBG-HflX-like GTPase superfamily. OBG GTPase family. Monomer. Mg(2+) is required as a cofactor.

The protein localises to the cytoplasm. Functionally, an essential GTPase which binds GTP, GDP and possibly (p)ppGpp with moderate affinity, with high nucleotide exchange rates and a fairly low GTP hydrolysis rate. Plays a role in control of the cell cycle, stress response, ribosome biogenesis and in those bacteria that undergo differentiation, in morphogenesis control. The chain is GTPase Obg from Mesomycoplasma hyopneumoniae (strain 232) (Mycoplasma hyopneumoniae).